The chain runs to 502 residues: N-fatty-acyl-amino acid synthase/hydrolase PM20D1 (502 aa).

Positions 1–25 (MAQRCVCVLALVAMLLLVFPTVSRS) are cleaved as a signal peptide. Histidine 125 serves as a coordination point for Zn(2+). Aspartate 127 is a catalytic residue. Zn(2+) is bound at residue aspartate 157. Glutamate 191 (proton acceptor) is an active-site residue. Zn(2+)-binding residues include glutamate 192 and aspartate 217. Residue asparagine 252 is glycosylated (N-linked (GlcNAc...) asparagine). A Zn(2+)-binding site is contributed by histidine 464.

The protein belongs to the peptidase M20A family. The cofactor is Zn(2+).

The protein resides in the secreted. It catalyses the reaction an N-acyl-L-amino acid + H2O = an L-alpha-amino acid + a carboxylate. It carries out the reaction an N-acyl-aromatic L-alpha-amino acid + H2O = an aromatic L-alpha-amino acid + a carboxylate. The enzyme catalyses L-phenylalanine + (9Z)-octadecenoate = N-(9Z-octadecenoyl)-L-phenylalanine + H2O. The catalysed reaction is N-(9Z-octadecenoyl)-L-leucine + H2O = L-leucine + (9Z)-octadecenoate. It catalyses the reaction N-(5Z,8Z,11Z,14Z)-eicosatetraenoyl-glycine + H2O = (5Z,8Z,11Z,14Z)-eicosatetraenoate + glycine. It carries out the reaction N-hexadecanoyl-L-phenylalanine + H2O = hexadecanoate + L-phenylalanine. The enzyme catalyses N-octadecanoyl-L-phenylalanine + H2O = octadecanoate + L-phenylalanine. The catalysed reaction is N-(4Z,7Z,10Z,13Z,16Z,19Z-docosahexaenoyl)-L-phenylalanine + H2O = (4Z,7Z,10Z,13Z,16Z,19Z)-docosahexaenoate + L-phenylalanine. It catalyses the reaction N-(9Z-octadecenoyl)-L-asparagine + H2O = L-asparagine + (9Z)-octadecenoate. It carries out the reaction (9Z)-octadecenoate + glycine = N-(9Z-octadecenoyl)glycine + H2O. The enzyme catalyses N-(9Z-octadecenoyl)-L-lysine + H2O = L-lysine + (9Z)-octadecenoate. The catalysed reaction is N-(9Z-octadecenoyl)-L-methionine + H2O = (9Z)-octadecenoate + L-methionine. It catalyses the reaction N-(9Z-octadecenoyl)-L-serine + H2O = L-serine + (9Z)-octadecenoate. It carries out the reaction N-(9Z-octadecenoyl)-L-tryptophan + H2O = L-tryptophan + (9Z)-octadecenoate. The enzyme catalyses N-(9Z-octadecenoyl)-L-tyrosine + H2O = L-tyrosine + (9Z)-octadecenoate. The catalysed reaction is N-(9Z-octadecenoyl)-L-glutamine + H2O = L-glutamine + (9Z)-octadecenoate. It catalyses the reaction N-(5Z,8Z,11Z,14Z-eicosatetraenoyl)-L-serine + H2O = (5Z,8Z,11Z,14Z)-eicosatetraenoate + L-serine. It carries out the reaction (5Z,8Z,11Z,14Z)-eicosatetraenoate + L-phenylalanine = N-(5Z,8Z,11Z,14Z-eicosatetraenoyl)-L-phenylalanine + H2O. The protein operates within amino-acid metabolism. Its pathway is energy metabolism. It functions in the pathway lipid metabolism; fatty acid metabolism. With respect to regulation, lipoproteins are powerful coactivators of PM20D1 activity in vitro and NAA biosynthesis in vivo. Its function is as follows. Secreted enzyme that regulates the endogenous N-fatty acyl amino acid (NAAs) tissue and circulating levels by functioning as a bidirectional NAA synthase/hydrolase. It condenses free fatty acids and free amino acids to generate NAAs and bidirectionally catalyzes the reverse hydrolysis reaction. Some of these NAAs stimulate oxidative metabolism via mitochondrial uncoupling, increasing energy expenditure in a UPC1-independent manner. Thereby, this secreted protein may indirectly regulate whole body energy expenditure. PM20D1 circulates in tight association with both low- and high-density (LDL and HDL,respectively) lipoprotein particles. The chain is N-fatty-acyl-amino acid synthase/hydrolase PM20D1 from Homo sapiens (Human).